Here is a 774-residue protein sequence, read N- to C-terminus: DNA ligase (774 aa).

NAD(+) contacts are provided by residues Asp-36–Asp-40, Ser-85–Leu-86, and Glu-161. The active-site N6-AMP-lysine intermediate is the Lys-163. Arg-184, Glu-221, Lys-341, and Lys-365 together coordinate NAD(+). Zn(2+) is bound by residues Cys-459, Cys-462, Cys-477, and Cys-482. Residues Val-693–Ile-774 form the BRCT domain.

It belongs to the NAD-dependent DNA ligase family. LigA subfamily. The cofactor is Mg(2+). It depends on Mn(2+) as a cofactor.

The enzyme catalyses NAD(+) + (deoxyribonucleotide)n-3'-hydroxyl + 5'-phospho-(deoxyribonucleotide)m = (deoxyribonucleotide)n+m + AMP + beta-nicotinamide D-nucleotide.. Its function is as follows. DNA ligase that catalyzes the formation of phosphodiester linkages between 5'-phosphoryl and 3'-hydroxyl groups in double-stranded DNA using NAD as a coenzyme and as the energy source for the reaction. It is essential for DNA replication and repair of damaged DNA. The chain is DNA ligase from Trichodesmium erythraeum (strain IMS101).